A 2182-amino-acid chain; its full sequence is Autophagy-related protein 2 (2182 aa).

Disordered stretches follow at residues 291–375 (SPSL…PLAD), 392–426 (EQDY…ATPR), 523–630 (YTHE…STTL), 663–682 (DIDP…VATP), 736–758 (GAFS…SSVE), and 793–816 (DKKP…SKET). Polar residues-rich tracts occupy residues 303-313 (NPPSRQATELS) and 322-331 (VSSSQASIRS). The segment covering 332 to 347 (NEPESASHHSLPENDH) has biased composition (basic and acidic residues). Composition is skewed to acidic residues over residues 528 to 540 (AENE…EQTT) and 613 to 624 (WDDDYDDPEEEP). Residues 745-758 (HAQQRSSQGTSSVE) are compositionally biased toward polar residues. Positions 793–813 (DKKPSPAEGSKQDTASKDAPS) are enriched in basic and acidic residues.

This sequence belongs to the ATG2 family. As to quaternary structure, interacts with ATG18.

The protein resides in the preautophagosomal structure membrane. It is found in the endoplasmic reticulum membrane. The enzyme catalyses a 1,2-diacyl-sn-glycero-3-phosphocholine(in) = a 1,2-diacyl-sn-glycero-3-phosphocholine(out). It catalyses the reaction a 1,2-diacyl-sn-glycero-3-phospho-L-serine(in) = a 1,2-diacyl-sn-glycero-3-phospho-L-serine(out). The catalysed reaction is a 1,2-diacyl-sn-glycero-3-phosphoethanolamine(in) = a 1,2-diacyl-sn-glycero-3-phosphoethanolamine(out). Lipid transfer protein required for autophagosome completion and peroxisome degradation and peroxisome degradation. Tethers the edge of the isolation membrane (IM) to the endoplasmic reticulum (ER) and mediates direct lipid transfer from ER to IM for IM expansion. ATG2 binds to the ER exit site (ERES), which is the membrane source for autophagosome formation, using basic residues in its N-terminal region (NR) and to the expanding edge of the IM through its C-terminal region. The latter binding is assisted by an ATG18-PtdIns3P interaction. ATG2 then extracts phospholipids from the membrane source using its NR and transfers them to ATG9 to the IM through its predicted beta-sheet-rich structure for membrane expansion. Autophagy is required for proper vegetative growth, asexual/sexual reproduction, and full virulence. Autophagy is particularly involved in the biosynthesis of deoxynivalenol (DON), an important virulence determinant. This Gibberella zeae (strain ATCC MYA-4620 / CBS 123657 / FGSC 9075 / NRRL 31084 / PH-1) (Wheat head blight fungus) protein is Autophagy-related protein 2.